The following is a 179-amino-acid chain: GTP-dependent dephospho-CoA kinase (179 aa).

Residues Asp55, Val57, Asp74, Lys76, and Glu128 each coordinate GTP.

Belongs to the GTP-dependent DPCK family.

It carries out the reaction 3'-dephospho-CoA + GTP = GDP + CoA + H(+). Its pathway is cofactor biosynthesis; coenzyme A biosynthesis. Catalyzes the GTP-dependent phosphorylation of the 3'-hydroxyl group of dephosphocoenzyme A to form coenzyme A (CoA). The chain is GTP-dependent dephospho-CoA kinase from Saccharolobus islandicus (strain M.16.4 / Kamchatka #3) (Sulfolobus islandicus).